Consider the following 125-residue polypeptide: Probable 4-amino-4-deoxy-L-arabinose-phosphoundecaprenol flippase subunit ArnF (125 aa).

The Cytoplasmic segment spans residues 1–2; the sequence is MG. Residues 3 to 23 traverse the membrane as a helical segment; sequence VMWGLISVAIASLAQLSLGFA. The Periplasmic portion of the chain corresponds to 24-33; that stretch reads MMRLPSIAHP. Residues 34 to 54 form a helical membrane-spanning segment; that stretch reads LAFISGLGAFNAATLALFAGL. Residues 55-76 are Cytoplasmic-facing; the sequence is AGYLVSVFCWQKTLHTLALSKA. A helical membrane pass occupies residues 77–97; that stretch reads YALLSLSYVLVWVASMLLPGL. Residues 98 to 100 lie on the Periplasmic side of the membrane; that stretch reads QGA. The chain crosses the membrane as a helical span at residues 101-121; sequence FSLKAMLGVLCIMAGVMLIFL. Topologically, residues 122-125 are cytoplasmic; sequence PARS.

It belongs to the ArnF family. As to quaternary structure, heterodimer of ArnE and ArnF.

It is found in the cell inner membrane. Its pathway is bacterial outer membrane biogenesis; lipopolysaccharide biosynthesis. Its function is as follows. Translocates 4-amino-4-deoxy-L-arabinose-phosphoundecaprenol (alpha-L-Ara4N-phosphoundecaprenol) from the cytoplasmic to the periplasmic side of the inner membrane. This chain is Probable 4-amino-4-deoxy-L-arabinose-phosphoundecaprenol flippase subunit ArnF, found in Salmonella choleraesuis (strain SC-B67).